Here is a 145-residue protein sequence, read N- to C-terminus: MELPLGSDLARLVRVWRALVDHRLKPLELTQTHWVTLHNIYHLPPGQSQIQLAKAIGIEQPSLVRTLDQLEEKGLITRHVCAHDRRAKRIMLTESAEPIIQAVNGVISHTRNEVLFGITPEQVDELALLVARLEKNILALHENQA.

One can recognise an HTH marR-type domain in the interval 2 to 135 (ELPLGSDLAR…LALLVARLEK (134 aa)). A DNA-binding region (H-T-H motif) is located at residues 49 to 72 (QIQLAKAIGIEQPSLVRTLDQLEE).

It belongs to the SlyA family. Homodimer.

Functionally, transcription regulator that can specifically activate or repress expression of target genes. The protein is Transcriptional regulator SlyA of Pectobacterium carotovorum subsp. carotovorum (strain PC1).